The following is a 934-amino-acid chain: Diacylglycerol kinase theta (934 aa).

Residues 1-50 (MAAAAEPGARTWPGSGSPRLGSPAGSPVLGISGRTRPGSGPERTSRAIGS) are disordered. A phosphoserine mark is found at Ser22 and Ser26. 3 consecutive Phorbol-ester/DAG-type zinc fingers follow at residues 54–102 (GHSF…KTPC), 115–162 (AHCF…CSDC), and 177–228 (HHHW…APEC). Residues 387-486 (TQEILKIYPG…TRFYVAETRA (100 aa)) form the Ras-associating domain. 2 short sequence motifs (LXXLL motif) span residues 547 to 551 (LYMLA) and 566 to 570 (LPDVL). The DAGKc domain occupies 576-713 (PDCCPLLVFV…MDRWTILLDA (138 aa)). Residues 905–916 (LRKAKQKPRKAG) show a composition bias toward basic residues. The disordered stretch occupies residues 905–934 (LRKAKQKPRKAGANRDTRVDTLPAPEGNPL).

It belongs to the eukaryotic diacylglycerol kinase family. In terms of assembly, interacts with RHOA (constitutively activated, GTP-bound); the interaction inhibits DGKQ. Interacts with PRKCE. Interacts with PRKCH. Interacts with PLCB1. Interacts with NR5A1; the interaction requires both LXXLL motifs in DGKQ and is required for full phosphatidic acid-mediated activation of NR5A1. Phosphorylated by PRKCE and PRKCH in vitro. Widely expressed in all brain regions, including the cortex and hippocampus with a specific expression in neuronal cells (at protein level).

It is found in the cytoplasm. The protein localises to the cytosol. It localises to the cell membrane. The protein resides in the synapse. Its subcellular location is the cytoskeleton. It is found in the nucleus. The protein localises to the nucleus speckle. It localises to the nucleus matrix. The enzyme catalyses a 1,2-diacyl-sn-glycerol + ATP = a 1,2-diacyl-sn-glycero-3-phosphate + ADP + H(+). It catalyses the reaction a 1-O-alkyl-sn-glycerol + ATP = a 1-O-alkyl-sn-glycero-3-phosphate + ADP + H(+). It carries out the reaction 1-O-alkyl-2-acyl-sn-glycerol + ATP = 1-O-alkyl-2-acyl-sn-glycero-3-phosphate + ADP + H(+). The catalysed reaction is 1,2-di-(9Z-octadecenoyl)-sn-glycerol + ATP = 1,2-di-(9Z-octadecenoyl)-sn-glycero-3-phosphate + ADP + H(+). The enzyme catalyses 1-O-hexadecyl-sn-glycerol + ATP = 1-O-hexadecyl-sn-glycero-3-phosphate + ADP + H(+). It catalyses the reaction 1-O-hexadecyl-2-acetyl-sn-glycerol + ATP = 1-O-hexadecyl-2-acetyl-sn-glycero-3-phosphate + ADP + H(+). It carries out the reaction 1-octadecanoyl-2-(5Z,8Z,11Z,14Z-eicosatetraenoyl)-sn-glycerol + ATP = 1-octadecanoyl-2-(5Z,8Z,11Z,14Z-eicosatetraenoyl)-sn-glycero-3-phosphate + ADP + H(+). It participates in lipid metabolism; glycerolipid metabolism. Activated by phosphatidylserine. In terms of biological role, diacylglycerol kinase that converts diacylglycerol/DAG into phosphatidic acid/phosphatidate/PA and regulates the respective levels of these two bioactive lipids. Thereby, acts as a central switch between the signaling pathways activated by these second messengers with different cellular targets and opposite effects in numerous biological processes. Within the adrenocorticotropic hormone signaling pathway, produces phosphatidic acid which in turn activates NR5A1 and subsequent steroidogenic gene transcription. Also functions downstream of the nerve growth factor signaling pathway being specifically activated in the nucleus by the growth factor. Through its diacylglycerol activity also regulates synaptic vesicle endocytosis. This chain is Diacylglycerol kinase theta (Dgkq), found in Mus musculus (Mouse).